Reading from the N-terminus, the 159-residue chain is Cyclic pyranopterin monophosphate synthase (159 aa).

Substrate-binding positions include 75-77 (LCH) and 113-114 (ME). Asp-128 is an active-site residue.

Belongs to the MoaC family. As to quaternary structure, homohexamer; trimer of dimers.

The enzyme catalyses (8S)-3',8-cyclo-7,8-dihydroguanosine 5'-triphosphate = cyclic pyranopterin phosphate + diphosphate. The protein operates within cofactor biosynthesis; molybdopterin biosynthesis. Catalyzes the conversion of (8S)-3',8-cyclo-7,8-dihydroguanosine 5'-triphosphate to cyclic pyranopterin monophosphate (cPMP). The sequence is that of Cyclic pyranopterin monophosphate synthase from Photorhabdus laumondii subsp. laumondii (strain DSM 15139 / CIP 105565 / TT01) (Photorhabdus luminescens subsp. laumondii).